Here is a 204-residue protein sequence, read N- to C-terminus: Ribonuclease HII (204 aa).

An RNase H type-2 domain is found at 13 to 204; that stretch reads GPVAGCDEAG…VRRAARLHSS (192 aa). The a divalent metal cation site is built by aspartate 19, glutamate 20, and aspartate 113.

Belongs to the RNase HII family. Mn(2+) serves as cofactor. Requires Mg(2+) as cofactor.

It is found in the cytoplasm. It carries out the reaction Endonucleolytic cleavage to 5'-phosphomonoester.. Endonuclease that specifically degrades the RNA of RNA-DNA hybrids. The sequence is that of Ribonuclease HII from Cutibacterium acnes (strain DSM 16379 / KPA171202) (Propionibacterium acnes).